We begin with the raw amino-acid sequence, 139 residues long: Natriuretic peptide Mf-NP (139 aa).

The signal sequence occupies residues 1–25; sequence MVGLSRLTGGGLLLVLALLPLALDG. Positions 26-75 are excised as a propeptide; that stretch reads KPLEEAPTAPSRIIPFSRPVRKESQAVLDPMVHPERPAGSGDDGDLSRLE. C86 and C102 are joined by a disulfide. The propeptide occupies 117–139; it reads IIPFSRPVRKESRAALDRMQHPG.

It belongs to the natriuretic peptide family. As to expression, expressed by the venom gland.

It is found in the secreted. In terms of biological role, natriuretic peptide that dose-dependently induces the rapid relaxation of rat aortic strips phenylephrine-precontracted. Acts by stimulating cGMP production in a dose-dependent manner (by probably activating NPR1 and/or NPR2). May also show potent hypotensive effects. The sequence is that of Natriuretic peptide Mf-NP from Micrurus fulvius (Eastern coral snake).